A 545-amino-acid polypeptide reads, in one-letter code: MEVHNATSFLGHGGMAQHLQPVLESPFAESILALTPLQGIALFLCLFWGYSSLTLHRRIKVPGAPVHGYWSWLEPTWLLQLRYAKDAHKIIASGYKRYNVNGKPFVLRRQDLDITVLPTKYVAELRTIPNAKLSRGKANFMEWGDQWAMKNLWSHIDLPIKVISENRHGQQGKYLEAMRKEFEHAMEVEMPQVDDWTAVDIQKIIQMILARMVGKMIVGKEACRSPEWLDLAEHFTEDFVGASIIMRMLPKWTHPLVTNLLPQRWRMRRRLRDAVNITNPCVTRHREAREKRAKGIEVDYEDNMVGWMLDNAPDKQYVLDHLPILILIILVPAAHTTAMGISNLLFHLCEYPEWGAKLLKEINDVNNEFGPIGERLPAKDWVTKLDLLDSFFNESQRLSQPLSITPNRYAVEDFTFKDGLHIPKGALLGWVSIHNQIDPKIAPDPDTFDPLRSYRKRQVSAEENAKHLAGQPSLENLTFGYGSQACPGRNIAITVLKMILSRILRDYEFKFGDGQARPQNIYLLEFIIPDPKAKLMVRKREASVS.

N-linked (GlcNAc...) asparagine glycosylation occurs at asparagine 5. Residues 30–50 (SILALTPLQGIALFLCLFWGY) traverse the membrane as a helical segment. The N-linked (GlcNAc...) asparagine glycan is linked to asparagine 276. The helical transmembrane segment at 322–342 (LPILILIILVPAAHTTAMGIS) threads the bilayer. Residues asparagine 393 and asparagine 476 are each glycosylated (N-linked (GlcNAc...) asparagine). Heme is bound at residue cysteine 486.

It belongs to the cytochrome P450 family. The cofactor is heme.

It localises to the membrane. It functions in the pathway antibiotic biosynthesis. In terms of biological role, cytochrome P450 monooxygenase; part of the gene cluster that mediates the biosynthesis of sordarin and hypoxysordarin, glycoside antibiotics with a unique tetracyclic diterpene aglycone structure. First, the geranylgeranyl diphosphate synthase sdnC constructs GGDP from farnesyl diphosphate and isopentenyl diphosphate. The diterpene cyclase sdnA then catalyzes the cyclization of GGDP to afford cycloaraneosene. Cycloaraneosene is then hydroxylated four times by the putative cytochrome P450 monooxygenases sdnB, sdnE, sdnF and sdnH to give a hydroxylated cycloaraneosene derivative such as cycloaraneosene-8,9,13,19-tetraol. Although the order of the hydroxylations is unclear, at least C8, C9 and C13 of the cycloaraneosene skeleton are hydroxylated before the sordaricin formation. Dehydration of the 13-hydroxy group of the hydroxylated cycloaraneosene derivative might be catalyzed by an unassigned hypothetical protein such as sdnG and sdnP to construct the cyclopentadiene moiety. The FAD-dependent oxidoreductase sdnN is proposed to catalyze the oxidation at C9 of the hydroxylated cycloaraneosene derivative and also catalyze the Baeyer-Villiger oxidation to give the lactone intermediate. The presumed lactone intermediate would be hydrolyzed to give an acrolein moiety and a carboxylate moiety. Then, [4+2]cycloaddition would occur between the acrolein moiety and the cyclopentadiene moiety to give sordaricin. SdnN might also be involved in the [4+2]cycloaddition after the hypothesized oxidation to accommodate the oxidized product and prompt the [4+2]cycloaddition. GDP-6-deoxy-D-altrose may be biosynthesized from GDP-D-mannose by the putative GDP-mannose-4,6-dehydratase sdnI and the short-chain dehydrogenase sdnK. The glycosyltransferase sdnJ catalyzes the attachment of 6-deoxy-D-altrose onto the 19-hydroxy group of sordaricin to give 4'-O-demethylsordarin. The methyltransferase sdnD would complete the biosynthesis of sordarin. Sordarin can be further modified into hypoxysordarin. The unique acyl chain at the 3'-hydroxy group of hypoxysordarin would be constructed by an iterative type I PKS sdnO and the trans-acting polyketide methyltransferase sdnL. SdnL would be responsible for the introduction of an alpha-methyl group of the polyketide chain. Alternatively, the beta-lactamase-like protein sdnR might be responsible for the cleavage and transfer of the polyketide chain from the PKS sdnO to sordarin. Two putative cytochrome P450 monooxygenases, sdnQ and sdnT, might catalyze the epoxidations of the polyketide chain to complete the biosynthesis of hypoxysordarin. Transcriptional regulators sdnM and sdnS are presumably encoded for the transcriptional regulation of the expression of the sdn gene cluster. The chain is Cytochrome P450 monooxygenase sdnB from Sordaria araneosa (Pleurage araneosa).